The primary structure comprises 247 residues: ABC-type transporter ATP-binding protein EcsA (247 aa).

In terms of domain architecture, ABC transporter spans 4–234; that stretch reads LSVKDLTGGY…FGMKDAALDD (231 aa). 36-43 contributes to the ATP binding site; that stretch reads GLNGAGKS.

It belongs to the ABC transporter superfamily.

In terms of biological role, has a role in exoprotein production, sporulation and competence. In Bacillus subtilis (strain 168), this protein is ABC-type transporter ATP-binding protein EcsA (ecsA).